The chain runs to 666 residues: Probable potassium transport system protein Kup (666 aa).

12 consecutive transmembrane segments (helical) span residues 16-36, 58-78, 100-120, 141-161, 165-185, 221-241, 253-273, 294-314, 343-363, 373-393, 399-419, and 424-444; these read GFIIALGIVYGDIGTSPLYTM, ISLIIWTLTLITTIKYVLIAL, PWLIIPAMIGGATLLSDGALT, IYQNQTNIIITTLVILIVLFG, FGTGFIGKIFGPVMFIWFSFL, IFILGSIFLATTGAEALYSDL, WPFVKMCIVWSYCGQAAWILA, VYLVSLATLAAIIASQALISG, LYIPVINWILFAVTSCTVLAF, YGLAITITMLMTTILLKYYLI, PILAHLAMAFFALVEFIFFLA, and FMHGGYAVVILALAIVFVMFI.

This sequence belongs to the HAK/KUP transporter (TC 2.A.72) family.

It localises to the cell membrane. It catalyses the reaction K(+)(in) + H(+)(in) = K(+)(out) + H(+)(out). In terms of biological role, transport of potassium into the cell. Likely operates as a K(+):H(+) symporter. The protein is Probable potassium transport system protein Kup of Streptococcus pyogenes serotype M4 (strain MGAS10750).